The primary structure comprises 156 residues: Small ribosomal subunit protein uS7 (156 aa).

Belongs to the universal ribosomal protein uS7 family. Part of the 30S ribosomal subunit. Contacts proteins S9 and S11.

Its function is as follows. One of the primary rRNA binding proteins, it binds directly to 16S rRNA where it nucleates assembly of the head domain of the 30S subunit. Is located at the subunit interface close to the decoding center, probably blocks exit of the E-site tRNA. The sequence is that of Small ribosomal subunit protein uS7 from Vibrio atlanticus (strain LGP32) (Vibrio splendidus (strain Mel32)).